We begin with the raw amino-acid sequence, 1453 residues long: MLLLDIMDSHCIHTLVDQRASSQPLEPAVETYDVSLSYGELSAMSSKLSQYLVSLGIYPEAKVVLMMEPCASYVVSTISVLKAGATFVPLDATQPTKRLAQLIKDIKPFIIITSIEVQDKARSLYDNVLVVDQTPSPWQDAPLKTGAACHVNGSNAAYIIFTSGSTGLPKGVIIEHGAFSASALARGNLTGLSLGSRVLQYAAHTFDVSVDEILTTLIHGGCVCIPSKADRLLLEPAINRLQVNHALLTPTSAKVLDPDAVPSLKTLQLGGELLPDDLIRKWCSRVRLFNVYGPTEASVACIMSEKSQKNIFGNVIGFPVGSVCRIVDPDDHNQLVAPGVVGELLIGGRILARGYLNDNIRTASSFIESPPWTSDDNATRFYKTGDLAKIDHYGSVTILGRKDNQVKIRGQRINVEEIETTLLATHLIRNCVVELPKKGPLANKLVAIVSTTSDTPHCKHPPPAAFSEQLQASVSTLDGLLRTRLHDALQDHLTSAMIPKRWIRMTSLPETTSGKVNRKEIRRWLERMDASVLQSVSLSNVESTGSRQSTRHKIQPEHEKILCRILGVNPTLLKPHLSFIQNGGDSIAAIELCRLGREIGISFWISSVLSDNSLEKLFHTSKSRFTKTIAHESQPGTPFPLSPVQRFFFDVVGNEHSSFTQYVTLQLKNRISIAQLERVIDRLVSAHPMLRARFHSENDTWLQSIPERISGSYSIFHHHGVGPPNHELMQPPVLSLASDPVLNVRLWDFDSGPQQLQLIAHHLVVDLVSWRIILDDLSKALRHERLPSAGMSFQSWCALQKEYAKTLDPKLVLPIPIISDNCAYWYPSVAQQENKHGMTETSTFSFDMLTFNSLLVGSLSKTQPIELMVGSFYTAFAKVFSDRETPTVFVESHGREPWQTGIDILQTVGWFTTAYPIHVPAQKASDLNESTLHTMRARRSIPANGHQYWCHRFLEQYEPDERKRSAPLEFVINFAGQFQQLSQADLPFRVMSTVGEETAEPQARRLSLFDIFISVEGDQLHFNISFPSWVSHRDKIHHLSTVWKDVLESAGVFSERPVLDPEPIDMLRELWHDCSLKDIDEVYWASDAQNHMLNSSSRHPSFYTVVGRWRLKCNTGAPLTDAFRVQDAWKRVITNHRALRTIFIPGDRKCGFLAVVMEQSFPMVLTGGASDTSDTNGTTRFFGLQSNERAIHLPHRIILHESNDGSILFSLEISHTVIDATSRSILMNELLDALVDIDLVPDDSHYHEYIESRDALYALSPPCQPPPCIFPPDLHCSDSAGSQLSTHVVELSQTSTANMSQICSQHGITMSSLLFLSWTLVLSNYTSSDDISFAYVASGRSMDVPGIERFVGLYVDLLILNIDTSGSDCLLDLALRVQQMSAGSSLHQHNQIPACRNPKNGRFDGQVNTMVNIRNVGIDSLRLERHDFELLLDSFEDPWDVRFFNTSCPFLPI.

The tract at residues 37–433 is adenylation; the sequence is SYGELSAMSS…ATHLIRNCVV (397 aa). The 83-residue stretch at 544–626 folds into the Carrier domain; that stretch reads TGSRQSTRHK…LFHTSKSRFT (83 aa). At S586 the chain carries O-(pantetheine 4'-phosphoryl)serine. Residues 639–1053 are epimerization (E) domain; that stretch reads FPLSPVQRFF…KDVLESAGVF (415 aa). The interval 1181-1391 is condensation; the sequence is FFGLQSNERA…AGSSLHQHNQ (211 aa).

It belongs to the NRP synthetase family. Requires pantetheine 4'-phosphate as cofactor.

Its pathway is secondary metabolite biosynthesis. Its function is as follows. NRPS-like tryptophan epimerase; part of the fragmented gene cluster that mediates the biosynthesis of fusarochromene, a tryptophan-derived metabolite closely related to a group of mycotoxins including fusarochromanone. Within the pathway, fscC catalyzes the first step via epimerization of L-tryptophan to provide the intermediate D-tryptophan. D-tryptophan is subsequently hydroxylated by the tryptophan 6-hydroxylase fscE to yield 6-hydroxytryptophan. The pyrrole ring undergoes cleavaged by the tryptophan 2,3-dioxygenase fscD and is finally converted to 4-hydroxykyrunenine by the hydrolase fscH. The NRPS-like oxidoreductase fscA reduces the carboxyl group to primary alcohol and the DMATS-type prenyltransferase fscG performs prenylation, followed by the formation of a chromene ring catalyzed by the oxidoreductase fscI, which leads to desacetylfusarochromene. Epoxidation by fscF and rearrangement reactions of chromene double bonds convert compound desacetylfusarochromene to fusarochromanones. Although specific acetyltransferases were not found near the fsc gene cluster, several predicted enzymes containing the N-acetyltransferase superfamily domain are present in the genome of F.equiseti. These predicted enzymes may have the potential to convert desacetylfusarochromene to fusarochromene. This is NRPS-like tryptophan epimerase fscC from Fusarium equiseti (Fusarium scirpi).